Consider the following 232-residue polypeptide: Large ribosomal subunit protein uL1 (232 aa).

The protein belongs to the universal ribosomal protein uL1 family. In terms of assembly, part of the 50S ribosomal subunit.

Binds directly to 23S rRNA. The L1 stalk is quite mobile in the ribosome, and is involved in E site tRNA release. In terms of biological role, protein L1 is also a translational repressor protein, it controls the translation of the L11 operon by binding to its mRNA. The polypeptide is Large ribosomal subunit protein uL1 (Bartonella bacilliformis (strain ATCC 35685 / KC583 / Herrer 020/F12,63)).